A 465-amino-acid chain; its full sequence is Probable dipeptidase A (465 aa).

The active site involves cysteine 3.

This sequence belongs to the peptidase C69 family.

The enzyme catalyses an L-aminoacyl-L-amino acid + H2O = 2 an L-alpha-amino acid. This is Probable dipeptidase A (pepDA) from Streptococcus pyogenes serotype M3 (strain SSI-1).